The primary structure comprises 41 residues: Large ribosomal subunit protein bL36 (41 aa).

The protein belongs to the bacterial ribosomal protein bL36 family.

The sequence is that of Large ribosomal subunit protein bL36 from Nitrobacter hamburgensis (strain DSM 10229 / NCIMB 13809 / X14).